The sequence spans 522 residues: Zinc finger protein C25B8.19c (522 aa).

Disordered stretches follow at residues 1-25 (MSSDNTPSINRRNNENPPQSSLPTT), 61-96 (DPQAATVSESANVSRPTPAPVPPAGNTNTPTTSNSN), 235-265 (QRQSSEAAEQPSSKNNTSGANPPSSNNQEVT), 311-386 (QPSS…HTLS), and 413-462 (NSAQ…STSS). Low complexity predominate over residues 84–96 (AGNTNTPTTSNSN). Composition is skewed to polar residues over residues 311–321 (QPSSRDLQNHP) and 335–344 (ASNTLNHANG). A compositionally biased stretch (low complexity) spans 345 to 362 (NQAENASESSTSQSNDSQ). Polar residues predominate over residues 413-427 (NSAQAHPMGQQSDSN). The span at 428 to 438 (YSDHHNNDKRA) shows a compositional bias: basic and acidic residues. A compositionally biased stretch (low complexity) spans 453–462 (SHTGSSSTSS). 2 consecutive C2H2-type zinc fingers follow at residues 468–495 (YRCTECLQGFSRPSSLKIHTYSHTGERP) and 496–522 (FVCDYAGCGKAFNVRSNMRRHQRIHGL).

Its subcellular location is the nucleus. The protein is Zinc finger protein C25B8.19c of Schizosaccharomyces pombe (strain 972 / ATCC 24843) (Fission yeast).